A 251-amino-acid polypeptide reads, in one-letter code: Small ribosomal subunit protein uS3 (251 aa).

A KH type-2 domain is found at 22-93 (LNEFFTRELA…GIAIYAERVE (72 aa)). The segment at 223 to 251 (TVKSYKQTAEDETETDAPVEAEAEVEATA) is disordered. Residues 232–251 (EDETETDAPVEAEAEVEATA) are compositionally biased toward acidic residues.

It belongs to the universal ribosomal protein uS3 family. In terms of assembly, component of the small ribosomal subunit. Mature ribosomes consist of a small (40S) and a large (60S) subunit. The 40S subunit contains about 32 different proteins and 1 molecule of RNA (18S). The 60S subunit contains 45 different proteins and 3 molecules of RNA (25S, 5.8S and 5S).

The protein resides in the cytoplasm. Component of the ribosome, a large ribonucleoprotein complex responsible for the synthesis of proteins in the cell. The small ribosomal subunit (SSU) binds messenger RNAs (mRNAs) and translates the encoded message by selecting cognate aminoacyl-transfer RNA (tRNA) molecules. The large subunit (LSU) contains the ribosomal catalytic site termed the peptidyl transferase center (PTC), which catalyzes the formation of peptide bonds, thereby polymerizing the amino acids delivered by tRNAs into a polypeptide chain. The nascent polypeptides leave the ribosome through a tunnel in the LSU and interact with protein factors that function in enzymatic processing, targeting, and the membrane insertion of nascent chains at the exit of the ribosomal tunnel. The protein is Small ribosomal subunit protein uS3 (RPS3) of Candida albicans (strain SC5314 / ATCC MYA-2876) (Yeast).